A 476-amino-acid chain; its full sequence is Cysteine--tRNA ligase (476 aa).

A Zn(2+)-binding site is contributed by cysteine 27. Residues 29-39 (PTTYNYIHLGN) carry the 'HIGH' region motif. Zn(2+)-binding residues include cysteine 207, histidine 232, and glutamate 236. The short motif at 264-268 (KMSKS) is the 'KMSKS' region element. Position 267 (lysine 267) interacts with ATP.

Belongs to the class-I aminoacyl-tRNA synthetase family. Monomer. It depends on Zn(2+) as a cofactor.

Its subcellular location is the cytoplasm. It carries out the reaction tRNA(Cys) + L-cysteine + ATP = L-cysteinyl-tRNA(Cys) + AMP + diphosphate. In Moorella thermoacetica (strain ATCC 39073 / JCM 9320), this protein is Cysteine--tRNA ligase.